We begin with the raw amino-acid sequence, 282 residues long: Putative 23S rRNA (guanine-N(1)-)-methyltransferase YxjB (282 aa).

Cys12, Cys15, Cys29, and His34 together coordinate Zn(2+). Residue 103 to 104 (EG) coordinates S-adenosyl-L-methionine.

It belongs to the methyltransferase superfamily. RlmA family.

The polypeptide is Putative 23S rRNA (guanine-N(1)-)-methyltransferase YxjB (yxjB) (Bacillus subtilis (strain 168)).